Reading from the N-terminus, the 299-residue chain is Oxygen-dependent coproporphyrinogen-III oxidase (299 aa).

Serine 92 provides a ligand contact to substrate. Residues histidine 96 and histidine 106 each contribute to the a divalent metal cation site. Histidine 106 acts as the Proton donor in catalysis. Residue 108–110 participates in substrate binding; the sequence is NVR. Histidine 145 and histidine 175 together coordinate a divalent metal cation. Residues 239 to 274 are important for dimerization; the sequence is YVEFNLVYDRGTLFGLQSGGRAESILMSLPPQVRWE. 257 to 259 serves as a coordination point for substrate; it reads GGR.

Belongs to the aerobic coproporphyrinogen-III oxidase family. As to quaternary structure, homodimer. The cofactor is a divalent metal cation.

The protein resides in the cytoplasm. It catalyses the reaction coproporphyrinogen III + O2 + 2 H(+) = protoporphyrinogen IX + 2 CO2 + 2 H2O. The protein operates within porphyrin-containing compound metabolism; protoporphyrin-IX biosynthesis; protoporphyrinogen-IX from coproporphyrinogen-III (O2 route): step 1/1. Functionally, involved in the heme biosynthesis. Catalyzes the aerobic oxidative decarboxylation of propionate groups of rings A and B of coproporphyrinogen-III to yield the vinyl groups in protoporphyrinogen-IX. The polypeptide is Oxygen-dependent coproporphyrinogen-III oxidase (Xanthomonas campestris pv. campestris (strain B100)).